The following is a 205-amino-acid chain: Delta-aminolevulinic acid dehydratase (205 aa).

Residues C117, C119, and C127 each contribute to the Zn(2+) site. Catalysis depends on K192, which acts as the Schiff-base intermediate with substrate. Residue R202 coordinates substrate.

It belongs to the ALAD family. As to quaternary structure, homooctamer. It depends on Zn(2+) as a cofactor.

It catalyses the reaction 2 5-aminolevulinate = porphobilinogen + 2 H2O + H(+). It participates in porphyrin-containing compound metabolism; protoporphyrin-IX biosynthesis; coproporphyrinogen-III from 5-aminolevulinate: step 1/4. Its function is as follows. Catalyzes an early step in the biosynthesis of tetrapyrroles. Binds two molecules of 5-aminolevulinate per subunit, each at a distinct site, and catalyzes their condensation to form porphobilinogen. In Ruminiclostridium josui (Clostridium josui), this protein is Delta-aminolevulinic acid dehydratase (hemB).